Reading from the N-terminus, the 266-residue chain is Metallo-beta-lactamase VIM-1 (266 aa).

An N-terminal signal peptide occupies residues 1–20 (MLKVISSLLVYMTASVMAVA). H114, H116, D118, H179, C198, and H240 together coordinate Zn(2+).

This sequence belongs to the metallo-beta-lactamase superfamily. Class-B beta-lactamase family. As to quaternary structure, monomer. It depends on Zn(2+) as a cofactor.

It localises to the periplasm. The enzyme catalyses a beta-lactam + H2O = a substituted beta-amino acid. Its activity is regulated as follows. Weakly inhibited by beta-lactamase-blocking agent sulbactam. In terms of biological role, class B beta-lactamase which confers resistance to the beta-lactam antibiotics, including penicillins, cephalosporins and carbapenems. Acts via hydrolysis of the beta-lactam ring. Has penicillin-, cephalosporin- and carbapenem-hydrolyzing activities. The sequence is that of Metallo-beta-lactamase VIM-1 from Pseudomonas aeruginosa (strain ATCC 15692 / DSM 22644 / CIP 104116 / JCM 14847 / LMG 12228 / 1C / PRS 101 / PAO1).